The following is a 572-amino-acid chain: Urease subunit alpha (572 aa).

One can recognise a Urease domain in the interval 134–572 (GGIDSHIHFI…LPLAQRYFLF (439 aa)). Positions 139, 141, and 222 each coordinate Ni(2+). Residue K222 is modified to N6-carboxylysine. Position 224 (H224) interacts with substrate. The Ni(2+) site is built by H251 and H277. The active-site Proton donor is the H325. A Ni(2+)-binding site is contributed by D365.

It belongs to the metallo-dependent hydrolases superfamily. Urease alpha subunit family. In terms of assembly, heterotrimer of UreA (gamma), UreB (beta) and UreC (alpha) subunits. Three heterotrimers associate to form the active enzyme. Ni cation is required as a cofactor. In terms of processing, carboxylation allows a single lysine to coordinate two nickel ions.

The protein localises to the cytoplasm. It catalyses the reaction urea + 2 H2O + H(+) = hydrogencarbonate + 2 NH4(+). It participates in nitrogen metabolism; urea degradation; CO(2) and NH(3) from urea (urease route): step 1/1. The chain is Urease subunit alpha from Paracidovorax citrulli (strain AAC00-1) (Acidovorax citrulli).